A 227-amino-acid polypeptide reads, in one-letter code: Ubiquitin domain-containing protein 1 (227 aa).

Residues 1-42 are disordered; the sequence is MGNCVGRQRRERPAAPGHPRKRAGRNEPLKKERLKWKSDYPM. Over residues 24-38 the composition is skewed to basic and acidic residues; sequence GRNEPLKKERLKWKS. The Ubiquitin-like domain maps to 149–224; that stretch reads FPLKVRLSTG…IQVIINQPPP (76 aa).

In terms of assembly, interacts with UBTD1.

In terms of biological role, may be involved in the regulation of cellular senescence through a positive feedback loop with TP53. Is a TP53 downstream target gene that increases the stability of TP53 protein by promoting the ubiquitination and degradation of MDM2. The sequence is that of Ubiquitin domain-containing protein 1 (Ubtd1) from Mus musculus (Mouse).